Reading from the N-terminus, the 100-residue chain is Large ribosomal subunit protein bL21 (100 aa).

Belongs to the bacterial ribosomal protein bL21 family. As to quaternary structure, part of the 50S ribosomal subunit. Contacts protein L20.

Functionally, this protein binds to 23S rRNA in the presence of protein L20. This Deinococcus deserti (strain DSM 17065 / CIP 109153 / LMG 22923 / VCD115) protein is Large ribosomal subunit protein bL21.